We begin with the raw amino-acid sequence, 147 residues long: Large ribosomal subunit protein uL15 (147 aa).

Residues 1–59 (MKLYELKPAPGSKKNRKRVGRGESSGHGKTSTRGHKGQWARSGGGVRPGFEGGQMPLTR) are disordered. Gly residues predominate over residues 42–52 (SGGGVRPGFEG).

This sequence belongs to the universal ribosomal protein uL15 family. As to quaternary structure, part of the 50S ribosomal subunit.

In terms of biological role, binds to the 23S rRNA. In Caldicellulosiruptor bescii (strain ATCC BAA-1888 / DSM 6725 / KCTC 15123 / Z-1320) (Anaerocellum thermophilum), this protein is Large ribosomal subunit protein uL15.